A 608-amino-acid chain; its full sequence is DNA mismatch repair protein MutL (608 aa).

It belongs to the DNA mismatch repair MutL/HexB family.

This protein is involved in the repair of mismatches in DNA. It is required for dam-dependent methyl-directed DNA mismatch repair. May act as a 'molecular matchmaker', a protein that promotes the formation of a stable complex between two or more DNA-binding proteins in an ATP-dependent manner without itself being part of a final effector complex. This is DNA mismatch repair protein MutL from Anoxybacillus flavithermus (strain DSM 21510 / WK1).